The following is a 91-amino-acid chain: Acylphosphatase (91 aa).

Residues 3 to 91 (HIKVNVKGQV…TELTKFEVKY (89 aa)) enclose the Acylphosphatase-like domain. Active-site residues include Arg-18 and Asn-36.

The protein belongs to the acylphosphatase family.

The enzyme catalyses an acyl phosphate + H2O = a carboxylate + phosphate + H(+). This is Acylphosphatase (acyP) from Oceanobacillus iheyensis (strain DSM 14371 / CIP 107618 / JCM 11309 / KCTC 3954 / HTE831).